The following is a 407-amino-acid chain: Peptidase T (407 aa).

H82 contributes to the Zn(2+) binding site. D84 is an active-site residue. D143 lines the Zn(2+) pocket. The Proton acceptor role is filled by E177. The Zn(2+) site is built by E178, D200, and H382.

This sequence belongs to the peptidase M20B family. The cofactor is Zn(2+).

It localises to the cytoplasm. The catalysed reaction is Release of the N-terminal residue from a tripeptide.. Cleaves the N-terminal amino acid of tripeptides. This Streptococcus pyogenes serotype M12 (strain MGAS2096) protein is Peptidase T.